A 216-amino-acid chain; its full sequence is Cytochrome c biogenesis ATP-binding export protein CcmA (216 aa).

One can recognise an ABC transporter domain in the interval 11 to 216; that stretch reads VSASKLTCIR…RKIRLDYRFV (206 aa). An ATP-binding site is contributed by 43–50; sequence GPNGAGKT.

Belongs to the ABC transporter superfamily. CcmA exporter (TC 3.A.1.107) family. The complex is composed of two ATP-binding proteins (CcmA) and two transmembrane proteins (CcmB).

It localises to the cell inner membrane. It catalyses the reaction heme b(in) + ATP + H2O = heme b(out) + ADP + phosphate + H(+). In terms of biological role, part of the ABC transporter complex CcmAB involved in the biogenesis of c-type cytochromes; once thought to export heme, this seems not to be the case, but its exact role is uncertain. Responsible for energy coupling to the transport system. This Shewanella sp. (strain MR-4) protein is Cytochrome c biogenesis ATP-binding export protein CcmA.